The chain runs to 335 residues: E3 ubiquitin-protein ligase NLA (335 aa).

Residues 1-154 (MKFCKKYEEY…ESRQGQAFKT (154 aa)) form the SPX domain. The segment at 231–280 (CSICLDTVFDPISLTCGHIYCYMCACSAASVNVVDGLKTAEATEKCPLCR) adopts an RING-type zinc-finger fold.

As to quaternary structure, interacts with UBC8. Interacts with PHT1-1 and PHT1-4. Forms homodimers (via RING domain). Interacts with UBC24/PHO2. Interacts with NPF2.13/NRT1.7. Interacts with NAC92/ORE1. As to expression, high expression in roots and stems, medium in seedlings, flowers, rosette and cauline leaves, and very low in siliques. Detected in cotyledons, hypocotyls, pedicel, receptacle, pistil, sepal, filament of stamen and at the two ends of developing siliques.

The protein localises to the nucleus speckle. It localises to the nucleus. It is found in the cell membrane. It catalyses the reaction S-ubiquitinyl-[E2 ubiquitin-conjugating enzyme]-L-cysteine + [acceptor protein]-L-lysine = [E2 ubiquitin-conjugating enzyme]-L-cysteine + N(6)-ubiquitinyl-[acceptor protein]-L-lysine.. It functions in the pathway protein modification; protein ubiquitination. Its function is as follows. E3 ubiquitin-protein ligase that mediates E2-dependent protein ubiquitination. Plays a role in salicylic acid-mediated negative feedback regulation of salicylic acid (SA) accumulation. May be involved in the overall regulation of SA, benzoic acid and phenylpropanoid biosynthesis. Involved in defense response. May act as negative regulator of resistance to the necrotrophic fungal pathogen Plectosphaerella cucumerina by modulating the accumulation of the phytoalexin camalexin and the salicylic acid- and jasmonate- dependent defense pathways. Controls the adaptability to nitrogen limitation by channeling the phenylpropanoid metabolic flux to the induced anthocyanin synthesis. Involved in the regulation of inorganic phosphate (Pi) homeostasis in a nitrate-dependent fashion. Directs the ubiquitination and subsequent degradation of the plasma membrane-localized inorganic phosphate transporters PHT1-1 and PHT1-4, to maintain phosphate homeostasis. The ubiquitination of PHTs triggers their clathrin-dependent endocytosis and trafficking to the vacuole through the endosomal pathway for degradation. Functions cooperatively with UBC24/PHO2 to regulate the abundance of PHT1-1, PHT1-2 and PHT1-3 in different subcellular compartments. Regulates Pi homeostasis by mediating, cooperatively with UBC24/PHO2, polyubiquitination of PHT1-4 and its targeting for degradation. Directs the polyubiquitination and subsequent degradation of the plasma membrane-localized nitrate transporter NPF2.13/NRT1.7, to help plants to adapt to nitrogen deficiency by regulating the source-to-sink remobilization of nitrate. Regulates leaf senescence during nitrogen deficiency by mediating, cooperatively with UBC24/PHO2, polyubiquitination of NAC92/ORE1 and its targeting for degradation. The polypeptide is E3 ubiquitin-protein ligase NLA (Arabidopsis thaliana (Mouse-ear cress)).